A 428-amino-acid chain; its full sequence is Enolase (428 aa).

Q163 lines the (2R)-2-phosphoglycerate pocket. Residue E205 is the Proton donor of the active site. Residues D242, E285, and D312 each contribute to the Mg(2+) site. Positions 337, 366, 367, and 388 each coordinate (2R)-2-phosphoglycerate. K337 functions as the Proton acceptor in the catalytic mechanism.

The protein belongs to the enolase family. Mg(2+) is required as a cofactor.

The protein localises to the cytoplasm. It is found in the secreted. It localises to the cell surface. It carries out the reaction (2R)-2-phosphoglycerate = phosphoenolpyruvate + H2O. The protein operates within carbohydrate degradation; glycolysis; pyruvate from D-glyceraldehyde 3-phosphate: step 4/5. Catalyzes the reversible conversion of 2-phosphoglycerate (2-PG) into phosphoenolpyruvate (PEP). It is essential for the degradation of carbohydrates via glycolysis. This chain is Enolase, found in Brevibacillus brevis (strain 47 / JCM 6285 / NBRC 100599).